The chain runs to 558 residues: Pyrethroid hydrolase Ces2a (558 aa).

Positions 1–26 (MPLARLPGWLCVVACGLLLLLQHVHG) are cleaved as a signal peptide. Cys-95 and Cys-122 are oxidised to a cystine. Lys-209 bears the N6-succinyllysine mark. Ser-227 serves as the catalytic Acyl-ester intermediate. Asn-275 carries an N-linked (GlcNAc...) asparagine glycan. Cysteines 279 and 290 form a disulfide. Lys-296 is subject to N6-succinyllysine. Residue Glu-344 is the Charge relay system of the active site. Asn-361 carries N-linked (GlcNAc...) asparagine glycosylation. Residue His-456 is the Charge relay system of the active site.

The protein belongs to the type-B carboxylesterase/lipase family.

Its subcellular location is the microsome. It catalyses the reaction (-)-trans-permethrin + H2O = (3-phenoxyphenyl)methanol + (1S,3R)-3-(2,2-dichlorovinyl)-2,2-dimethylcyclopropanecarboxylate + H(+). It carries out the reaction all-trans-retinyl hexadecanoate + H2O = all-trans-retinol + hexadecanoate + H(+). Carboxylesterases that catalyzes the hydrolysis of pyrethroids pesticides. Hydrolyzes permethrin faster than cypermethrin. Hydrolyzes retinyl esters. The polypeptide is Pyrethroid hydrolase Ces2a (Mus musculus (Mouse)).